The primary structure comprises 579 residues: Mitogen-activated protein kinase kinase kinase 7 (579 aa).

Residues 1-300 (MSTASAASSS…FPGADEPLQY (300 aa)) form an interaction with MAPK8IP1 region. The 256-residue stretch at 36-291 (IEVEEVVGRG…KIMTHLMRYF (256 aa)) folds into the Protein kinase domain. Residues 42–50 (VGRGAFGVV) and Lys-63 contribute to the ATP site. Lys-72 participates in a covalent cross-link: Glycyl lysine isopeptide (Lys-Gly) (interchain with G-Cter in ubiquitin). The active-site Proton acceptor is the Asp-156. Residue Lys-158 forms a Glycyl lysine isopeptide (Lys-Gly) (interchain with G-Cter in ubiquitin) linkage. Phosphothreonine; by autocatalysis occurs at positions 184 and 187. Residue Ser-192 is modified to Phosphoserine; by autocatalysis. A Glycyl lysine isopeptide (Lys-Gly) (interchain with G-Cter in ubiquitin) cross-link involves residue Lys-209. Disordered stretches follow at residues 301–339 (PCQY…EQVP) and 354–391 (KNQA…MSAD). Residues 306 to 322 (DEGQSNSATSTGSFMDI) show a composition bias toward polar residues. Composition is skewed to low complexity over residues 323–334 (TSTNTSNKSDTN) and 361–375 (SESG…RGSS). A phosphoserine mark is found at Ser-367, Ser-389, and Ser-412. Residues 416–425 (LTVTGTDPGQ) show a composition bias toward polar residues. Positions 416–466 (LTVTGTDPGQVSSRSSSPSVRMITTSGPTSEKPARSHPWTPDDSTDTNGSD) are disordered. Residues 426-436 (VSSRSSSPSVR) show a composition bias toward low complexity. Ser-428 is modified (phosphoserine).

It belongs to the protein kinase superfamily. STE Ser/Thr protein kinase family. MAP kinase kinase kinase subfamily. As to quaternary structure, can form homodimer. Binds both upstream activators and downstream substrates in multimolecular complexes. Interacts with TAB1/MAP3K7IP1, TAB2/MAP3K7IP2 and TAB3/MAP3K7IP3. Identified in the TRIKA2 complex composed of MAP3K7/TAK1, TAB1/MAP3K7IP1 and TAB2/MAP3K7IP2. Interacts with PPM1L and PPM1B/PP2CB. Interaction with PP2A and PPP6C leads to its repressed activity. Interacts with TRAF6 and TAB1/MAP3K7IP1; during IL-1 signaling. Interacts with TAOK1 and TAOK2; interaction with TAOK2 interferes with MAP3K7 interaction with IKKA, thus preventing NF-kappa-B activation. Interacts with DYNC2I2 (via WD domains). Interacts with CYLD and RBCK1. Interacts with TGFBR1; induces MAP3K7/TAK1 activation by TRAF6. Interacts with MAPK8IP1 and SMAD6. Interacts with isoform 1 of VRK2. Interacts with DAB2; the interaction is induced by TGF-beta stimulation and may mediate TGF-beta stimulated JNK activation. Interacts with TRIM5. Part of a complex containing ITCH, NDFIP1 and MAP3K7. Interacts with IFIT5; the interaction synergizes the recruitment of IKK to MAP3K7 and enhances IKK phosphorylation. Interacts with PLEKHM1 (via N- and C-terminus). Found in a complex with SH3RF1, RAC2, MAP2K7/MKK7, MAPK8IP1/JIP1, MAPK8/JNK1 and MAPK9/JNK2. Interacts with SASH1. Interacts with RIPK1. It depends on Mg(2+) as a cofactor. Post-translationally, association with TAB1/MAP3K7IP1 promotes autophosphorylation at Ser-192 and subsequent activation. Association with TAB2/MAP3K7IP2, itself associated with free unanchored Lys-63 polyubiquitin chain, promotes autophosphorylation and subsequent activation of MAP3K7. Dephosphorylation at Ser-192 by PPM1B/PP2CB and at Thr-187 by PP2A and PPP6C leads to inactivation. 'Lys-48'-linked polyubiquitination at Lys-72 is induced by TNFalpha, and leads to proteasomal degradation. Undergoes 'Lys-48'-linked polyubiquitination catalyzed by ITCH. 'Lys-63'-linked polyubiquitination at Lys-158 by TRIM8 does not lead to proteasomal degradation but contributes to autophosphorylation and activation. Deubiquitinated by CYLD, a protease that selectively cleaves 'Lys-63'-linked ubiquitin chains. Deubiquitinated by USP19; leading to negative regulation of TNF-alpha- and IL-1beta-triggered NF-kappa-B activation.

Its subcellular location is the cytoplasm. It is found in the cell membrane. The enzyme catalyses L-seryl-[protein] + ATP = O-phospho-L-seryl-[protein] + ADP + H(+). The catalysed reaction is L-threonyl-[protein] + ATP = O-phospho-L-threonyl-[protein] + ADP + H(+). Activated by pro-inflammatory cytokines and in response to physical and chemical stresses, including osmotic stress, oxidative stress, arsenic and ultraviolet light irradiation. Activated by 'Lys-63'-linked polyubiquitination and by autophosphorylation. Association with TAB1/MAP3K7IP1 and TAB2/MAP3K7IP2 promotes activation through autophosphorylation, whereas PPM1B/PP2CB, PP2A and PPP6C dephosphorylation leads to inactivation. Ceramides are also able to activate MAP3K7/TAK1. Serine/threonine kinase which acts as an essential component of the MAP kinase signal transduction pathway. Plays an important role in the cascades of cellular responses evoked by changes in the environment. Mediates signal transduction of TRAF6, various cytokines including interleukin-1 (IL-1), transforming growth factor-beta (TGFB), TGFB-related factors like BMP2 and BMP4, toll-like receptors (TLR), tumor necrosis factor receptor CD40 and B-cell receptor (BCR). Once activated, acts as an upstream activator of the MKK/JNK signal transduction cascade and the p38 MAPK signal transduction cascade through the phosphorylation and activation of several MAP kinase kinases like MAP2K1/MEK1, MAP2K3/MKK3, MAP2K6/MKK6 and MAP2K7/MKK7. These MAP2Ks in turn activate p38 MAPKs and c-jun N-terminal kinases (JNKs); both p38 MAPK and JNK pathways control the transcription factors activator protein-1 (AP-1). Independently of MAP2Ks and p38 MAPKs, acts as a key activator of NF-kappa-B by promoting activation of the I-kappa-B-kinase (IKK) core complex. Mechanistically, recruited to polyubiquitin chains of RIPK2 and IKBKG/NEMO via TAB2/MAP3K7IP2 and TAB3/MAP3K7IP3, and catalyzes phosphorylation and activation of IKBKB/IKKB component of the IKK complex, leading to NF-kappa-B activation. In osmotic stress signaling, plays a major role in the activation of MAPK8/JNK1, but not that of NF-kappa-B. Promotes TRIM5 capsid-specific restriction activity. Phosphorylates RIPK1 at 'Ser-321' which positively regulates RIPK1 interaction with RIPK3 to promote necroptosis but negatively regulates RIPK1 kinase activity and its interaction with FADD to mediate apoptosis. Phosphorylates STING1 in response to cGAMP-activation, promoting association between STEEP1 and STING1 and STING1 translocation to COPII vesicles. The polypeptide is Mitogen-activated protein kinase kinase kinase 7 (MAP3K7) (Bos taurus (Bovine)).